Reading from the N-terminus, the 246-residue chain is Nodulation protein G (246 aa).

8–32 (VTGAMGGLGTAICQALAKDGCIVAA) provides a ligand contact to NAD(+). Substrate is bound at residue Ser140. Tyr153 (proton acceptor) is an active-site residue.

The protein belongs to the short-chain dehydrogenases/reductases (SDR) family.

Functionally, proposed to modify Nod factor fatty acyl chain. The sequence is that of Nodulation protein G (nodG) from Azospirillum brasilense.